A 179-amino-acid polypeptide reads, in one-letter code: Large ribosomal subunit protein uL6 (179 aa).

The protein belongs to the universal ribosomal protein uL6 family. As to quaternary structure, part of the 50S ribosomal subunit.

Its function is as follows. This protein binds to the 23S rRNA, and is important in its secondary structure. It is located near the subunit interface in the base of the L7/L12 stalk, and near the tRNA binding site of the peptidyltransferase center. This is Large ribosomal subunit protein uL6 from Synechococcus sp. (strain CC9311).